The primary structure comprises 133 residues: Methylglyoxal synthase (133 aa).

Residues 1-133 enclose the MGS-like domain; it reads MPPKPRIALI…ARENGAAQAG (133 aa). Substrate is bound by residues His12, Lys16, 38–41, and 58–59; these read TGTT and SG. The active-site Proton donor/acceptor is the Asp64. His91 is a binding site for substrate.

It belongs to the methylglyoxal synthase family.

It carries out the reaction dihydroxyacetone phosphate = methylglyoxal + phosphate. In terms of biological role, catalyzes the formation of methylglyoxal from dihydroxyacetone phosphate. This is Methylglyoxal synthase from Cupriavidus taiwanensis (strain DSM 17343 / BCRC 17206 / CCUG 44338 / CIP 107171 / LMG 19424 / R1) (Ralstonia taiwanensis (strain LMG 19424)).